Here is a 68-residue protein sequence, read N- to C-terminus: Beta-toxin Im-2 (68 aa).

In terms of domain architecture, LCN-type CS-alpha/beta spans 1–67; it reads KDGYPMVRAG…VWTYEKNTCK (67 aa). 4 disulfides stabilise this stretch: C15–C66, C19–C40, C26–C47, and C30–C49.

This sequence belongs to the long (4 C-C) scorpion toxin superfamily. Sodium channel inhibitor family. Beta subfamily. As to expression, expressed by the venom gland.

It is found in the secreted. Beta toxins bind voltage-independently at site-4 of sodium channels (Nav) and shift the voltage of activation toward more negative potentials thereby affecting sodium channel activation and promoting spontaneous and repetitive firing. Is toxic to both insect and mammals. Induces paralysis in Acheta domestica crickets, but does not induce death, whereas intracerebroventricular injection into mice causes immediate death (at a dose of 0.05 ug/g). This chain is Beta-toxin Im-2, found in Isometrus maculatus (Lesser brown scorpion).